The chain runs to 137 residues: Large ribosomal subunit protein uL16 (137 aa).

Residues 1–20 are disordered; it reads MLQPSNRKYRKDFKGRNRGV. Residues 7–17 show a composition bias toward basic residues; sequence RKYRKDFKGRN.

It belongs to the universal ribosomal protein uL16 family. In terms of assembly, part of the 50S ribosomal subunit.

Functionally, binds 23S rRNA and is also seen to make contacts with the A and possibly P site tRNAs. The polypeptide is Large ribosomal subunit protein uL16 (Coxiella burnetii (strain CbuG_Q212) (Coxiella burnetii (strain Q212))).